The chain runs to 159 residues: S-ribosylhomocysteine lyase (159 aa).

Fe cation is bound by residues H53, H57, and C124.

This sequence belongs to the LuxS family. As to quaternary structure, homodimer. It depends on Fe cation as a cofactor.

The catalysed reaction is S-(5-deoxy-D-ribos-5-yl)-L-homocysteine = (S)-4,5-dihydroxypentane-2,3-dione + L-homocysteine. In terms of biological role, involved in the synthesis of autoinducer 2 (AI-2) which is secreted by bacteria and is used to communicate both the cell density and the metabolic potential of the environment. The regulation of gene expression in response to changes in cell density is called quorum sensing. Catalyzes the transformation of S-ribosylhomocysteine (RHC) to homocysteine (HC) and 4,5-dihydroxy-2,3-pentadione (DPD). This chain is S-ribosylhomocysteine lyase, found in Clostridium beijerinckii (strain ATCC 51743 / NCIMB 8052) (Clostridium acetobutylicum).